A 370-amino-acid chain; its full sequence is uncharacterized protein (370 aa).

This is an uncharacterized protein from Caenorhabditis elegans.